A 2179-amino-acid polypeptide reads, in one-letter code: Voltage-dependent L-type calcium channel subunit alpha-1D (2179 aa).

3 disordered regions span residues 1-21 (MMMMMMMKKMQHQRQHQEDHA), 30-49 (TRLPISGEGPTSQPNSSKQT), and 64-100 (KAAQTMSTSAPPPVGSLSQRKRQQYAKSKKQGNSSNS). The Cytoplasmic segment spans residues 1-126 (MMMMMMMKKM…RACISIVEWK (126 aa)). A compositionally biased stretch (polar residues) spans 38 to 49 (GPTSQPNSSKQT). Residues 82–93 (QRKRQQYAKSKK) show a composition bias toward basic residues. The stretch at 113–409 (NPIRRACISI…LVLGVLSGEF (297 aa)) is one I repeat. The chain crosses the membrane as a helical span at residues 127–145 (PFDIFILLAIFANCVALAI). Residues 146–163 (YIPFPEDDSNSTNHNLEK) lie on the Extracellular side of the membrane. The chain crosses the membrane as a helical span at residues 164 to 183 (VEYAFLIIFTVETFLKIIAY). The Cytoplasmic segment spans residues 184–195 (GLLLHPNAYVRN). A helical membrane pass occupies residues 196-214 (GWNLLDFVIVIVGLFSVIL). The Extracellular segment spans residues 215 to 235 (EQLTKETEGGNHSSGKSGGFD). The chain crosses the membrane as a helical span at residues 236-254 (VKALRAFRVLRPLRLVSGV). The Cytoplasmic portion of the chain corresponds to 255–273 (PSLQVVLNSIIKAMVPLLH). Residues 274–293 (IALLVLFVIIIYAIIGLELF) form a helical membrane-spanning segment. Residues 294–381 (IGKMHKTCFF…WVNDAIGWEW (88 aa)) are Extracellular-facing. Position 364 (Glu-364) interacts with Ca(2+). Residues 382–406 (PWVYFVSLIILGSFFVLNLVLGVLS) traverse the membrane as a helical segment. Residues 407 to 543 (GEFSKEREKA…RRCRAAVKSV (137 aa)) lie on the Cytoplasmic side of the membrane. The interval 429–446 (QQLEEDLKGYLDWITQAE) is binding to the beta subunit. The segment at 449–480 (DPENEEEGGEEGKRNTSMPTSETESVNTENVS) is disordered. Residues 463–479 (NTSMPTSETESVNTENV) show a composition bias toward polar residues. An II repeat occupies 529–775 (NRFNRRRCRA…VFLAIAVDNL (247 aa)). A helical transmembrane segment spans residues 544–563 (TFYWLVIVLVFLNTLTISSE). Over 564 to 578 (HYNQPDWLTQIQDIA) the chain is Extracellular. Residues 579-597 (NKVLLALFTCEMLVKMYSL) traverse the membrane as a helical segment. Residues 598 to 605 (GLQAYFVS) lie on the Cytoplasmic side of the membrane. Residues 606 to 624 (LFNRFDCFVVCGGITETIL) form a helical membrane-spanning segment. Residues 625 to 634 (VELELMSPLG) lie on the Extracellular side of the membrane. Residues 635 to 653 (VSVFRCVRLLRIFKVTRHW) traverse the membrane as a helical segment. Topologically, residues 654-672 (TSLSNLVASLLNSMKSIAS) are cytoplasmic. Residues 673–693 (LLLLLFLFIIIFSLLGMQLFG) traverse the membrane as a helical segment. Residues 694 to 747 (GKFNFDETQTKRSTFDNFPQALLTVFQILTGEDWNAVMYDGIMAYGGPSSSGMI) are Extracellular-facing. Position 725 (Glu-725) interacts with Ca(2+). The chain crosses the membrane as a helical span at residues 748 to 772 (VCIYFIILFICGNYILLNVFLAIAV). Positions 771-810 (AVDNLADAESLNTAQKEEAEEKERKKIARKESLENKKNNK) form a coiled coil. Topologically, residues 773-906 (DNLADAESLN…VGCHKLINHH (134 aa)) are cytoplasmic. Positions 786–810 (KEEAEEKERKKIARKESLENKKNNK) are enriched in basic and acidic residues. The tract at residues 786 to 870 (KEEAEEKERK…AGPRPRRISE (85 aa)) is disordered. A compositionally biased stretch (polar residues) spans 811–822 (PEVNQIANSDNK). The span at 845–858 (VGEEEEEEEEDEPE) shows a compositional bias: acidic residues. Residues 893–1175 (NPIRVGCHKL…IFVGFVIVTF (283 aa)) form an III repeat. Residues 907–925 (IFTNLILVFIMLSSAALAA) traverse the membrane as a helical segment. Residues 926–941 (EDPIRSHSFRNTILGY) lie on the Extracellular side of the membrane. The chain crosses the membrane as a helical span at residues 942–961 (FDYAFTAIFTVEILLKMTTF). Over 962–973 (GAFLHKGAFCRN) the chain is Cytoplasmic. Residues 974 to 992 (YFNLLDMLVVGVSLVSFGI) form a helical membrane-spanning segment. At 993-998 (QSSAIS) the chain is on the extracellular side. The chain crosses the membrane as a helical span at residues 999–1018 (VVKILRVLRVLRPLRAINRA). Residues 1019 to 1037 (KGLKHVVQCVFVAIRTIGN) are Cytoplasmic-facing. The chain crosses the membrane as a helical span at residues 1038-1057 (IMIVTTLLQFMFACIGVQLF). Residues 1058-1147 (KGKFYRCTDE…VGPVYNYRVE (90 aa)) lie on the Extracellular side of the membrane. Residues 1095 to 1185 (RIWQNSDFNF…QEQGEKEYKN (91 aa)) are dihydropyridine binding. A Ca(2+)-binding site is contributed by Glu-1121. A helical membrane pass occupies residues 1148–1168 (ISIFFIIYIIIVAFFMMNIFV). Residues 1169-1225 (GFVIVTFQEQGEKEYKNCELDKNQRQCVEYALKARPLRRYIPKNPYQYKFWYVVNSS) lie on the Cytoplasmic side of the membrane. Residues 1212-1487 (NPYQYKFWYV…LFVAVIMDNF (276 aa)) form an IV repeat. A helical membrane pass occupies residues 1226 to 1244 (PFEYMMFVLIMLNTLCLAM). Residues 1245-1259 (QHYEQSKMFNDAMDI) are Extracellular-facing. A helical transmembrane segment spans residues 1260–1279 (LNMVFTGVFTVEMVLKVIAF). Over 1280 to 1286 (KPKGYFS) the chain is Cytoplasmic. A helical transmembrane segment spans residues 1287–1308 (DAWNTFDSLIVIGSIIDVALSE). At 1309 to 1333 (ADPSESETIPLPTATPGNSEESNRI) the chain is on the extracellular side. Residues 1334–1353 (SITFFRLFRVMRLVKLLSRG) form a helical membrane-spanning segment. Residues 1354-1372 (EGIRTLLWTFIKSFQALPY) are Cytoplasmic-facing. The helical transmembrane segment at 1373-1392 (VALLIAMLFFIYAVIGMQMF) threads the bilayer. Topologically, residues 1393-1459 (GKVAMRDNNQ…GEEYTCGSNF (67 aa)) are extracellular. The tract at residues 1440–1506 (LCDPDSDYNP…LGPHHLDEFK (67 aa)) is dihydropyridine binding. Residues 1452 to 1495 (EYTCGSNFAIVYFISFYMLCAFLIINLFVAVIMDNFDYLTRDWS) are phenylalkylamine binding. The helical transmembrane segment at 1460-1484 (AIVYFISFYMLCAFLIINLFVAVIM) threads the bilayer. The Cytoplasmic portion of the chain corresponds to 1485–2179 (DNFDYLTRDW…ADEMICITTL (695 aa)). Disordered regions lie at residues 1704–1789 (LLGN…AHGK), 1896–1941 (FERP…RSSF), and 2135–2171 (GDMGPISHRQDYELQDFGPGYSDEEPDPGREEEDLAD). Positions 1764–1782 (SIGKQAPTSTNANLNNANM) are enriched in polar residues. The span at 2156-2171 (SDEEPDPGREEEDLAD) shows a compositional bias: acidic residues.

It belongs to the calcium channel alpha-1 subunit (TC 1.A.1.11) family. CACNA1D subfamily. In terms of assembly, voltage-dependent calcium channels are multisubunit complexes, consisting of alpha-1, alpha-2, beta and delta subunits in a 1:1:1:1 ratio. The channel activity is directed by the pore-forming and voltage-sensitive alpha-1 subunit. In many cases, this subunit is sufficient to generate voltage-sensitive calcium channel activity. The auxiliary subunits beta and alpha-2/delta linked by a disulfide bridge regulate the channel activity. Interacts (via IQ domain) with CABP1 and CABP4 in a calcium independent manner. Interacts with RIMBP2. Expressed in the inner hair cells (IHC) of the cochlea.

Its subcellular location is the membrane. The catalysed reaction is Ca(2+)(in) = Ca(2+)(out). Its function is as follows. Voltage-sensitive calcium channels (VSCC) mediate the entry of calcium ions into excitable cells and are also involved in a variety of calcium-dependent processes, including muscle contraction, hormone or neurotransmitter release, gene expression, cell motility, cell division and cell death. The isoform alpha-1D gives rise to L-type calcium currents. Long-lasting (L-type) calcium channels belong to the 'high-voltage activated' (HVA) group. They are blocked by dihydropyridines (DHP), phenylalkylamines, and by benzothiazepines. This Mus musculus (Mouse) protein is Voltage-dependent L-type calcium channel subunit alpha-1D (Cacna1d).